Consider the following 1154-residue polypeptide: Voltage-dependent calcium channel subunit alpha-2/delta-2 (1154 aa).

The signal sequence occupies residues 1-18; sequence MAVPARTCGASWPGPVRT. Residues 1 to 37 form a disordered region; the sequence is MAVPARTCGASWPGPVRTARPWPGRGPRPCPDPRGPA. The Extracellular segment spans residues 19-1116; the sequence is ARPWPGRGPR…TEDTSDCGRG (1098 aa). Positions 24 to 34 are enriched in pro residues; sequence GRGPRPCPDPR. N205 is a glycosylation site (N-linked (GlcNAc...) asparagine). The 179-residue stretch at 294–472 folds into the VWFA domain; sequence DMVIIVDVSG…INTQEYLDVL (179 aa). D300, S302, and S304 together coordinate a divalent metal cation. The MIDAS-like motif signature appears at 300–304; sequence DVSGS. 6 N-linked (GlcNAc...) asparagine glycosylation sites follow: N389, N421, N510, N543, N627, and N864. Cysteines 446 and 1101 form a disulfide. The 90-residue stretch at 488-577 folds into the Cache domain; that stretch reads WTNVYEDALG…KPQTTNFREP (90 aa). Residues 1117–1137 traverse the membrane as a helical segment; that stretch reads ASFPPSLGVLVSLQLLLLLGL. Residues 1138–1154 lie on the Cytoplasmic side of the membrane; it reads PPRPQPQVHSFAASRHL.

The protein belongs to the calcium channel subunit alpha-2/delta family. In terms of assembly, dimer formed of alpha-2-2 and delta-2 chains; disulfide-linked. Voltage-dependent calcium channels are multisubunit complexes, consisting of alpha-1 (CACNA1), alpha-2 (CACNA2D), beta (CACNB) and delta (CACNA2D) subunits in a 1:1:1:1 ratio. Post-translationally, N-glycosylated. In terms of processing, may be proteolytically processed into subunits alpha-2-2 and delta-2 that are disulfide-linked. It is however unclear whether such cleavage really takes place in vivo and has a functional role. According to PubMed:11306709, it is processed, at least in vitro, while according to PubMed:17052222, it is only poorly processed in vivo. In terms of tissue distribution, predominantly expressed in brain in a restricted pattern. Also expressed at lower level in kidney and testis Not expressed in lung at any moment of development. In brain, it localizes to sections of P21 brain. Expressed at high level in the cerebellum, with moderate levels in medulla, pons, and striatum. Also expressed in cortex, hippocampus, habenula and nucleus reticularis thalami (nRT). Strongly expressed in cerebellar Purkinje cells.

Its subcellular location is the membrane. The alpha-2/delta subunit of voltage-dependent calcium channels regulates calcium current density and activation/inactivation kinetics of the calcium channel. Acts as a regulatory subunit for P/Q-type calcium channel (CACNA1A), N-type (CACNA1B), L-type (CACNA1C OR CACNA1D) and possibly T-type (CACNA1G). This chain is Voltage-dependent calcium channel subunit alpha-2/delta-2 (Cacna2d2), found in Mus musculus (Mouse).